We begin with the raw amino-acid sequence, 69 residues long: DNA gyrase inhibitor YacG (69 aa).

Positions 7, 10, 26, and 30 each coordinate Zn(2+).

This sequence belongs to the DNA gyrase inhibitor YacG family. Interacts with GyrB. It depends on Zn(2+) as a cofactor.

Inhibits all the catalytic activities of DNA gyrase by preventing its interaction with DNA. Acts by binding directly to the C-terminal domain of GyrB, which probably disrupts DNA binding by the gyrase. This is DNA gyrase inhibitor YacG from Shewanella sp. (strain ANA-3).